Consider the following 329-residue polypeptide: 4-hydroxythreonine-4-phosphate dehydrogenase (329 aa).

Substrate-binding residues include His136 and Thr137. 3 residues coordinate a divalent metal cation: His166, His211, and His266. Lys274, Asn283, and Arg292 together coordinate substrate.

It belongs to the PdxA family. Homodimer. Zn(2+) serves as cofactor. The cofactor is Mg(2+). Co(2+) is required as a cofactor.

The protein localises to the cytoplasm. It catalyses the reaction 4-(phosphooxy)-L-threonine + NAD(+) = 3-amino-2-oxopropyl phosphate + CO2 + NADH. The protein operates within cofactor biosynthesis; pyridoxine 5'-phosphate biosynthesis; pyridoxine 5'-phosphate from D-erythrose 4-phosphate: step 4/5. Its function is as follows. Catalyzes the NAD(P)-dependent oxidation of 4-(phosphooxy)-L-threonine (HTP) into 2-amino-3-oxo-4-(phosphooxy)butyric acid which spontaneously decarboxylates to form 3-amino-2-oxopropyl phosphate (AHAP). The sequence is that of 4-hydroxythreonine-4-phosphate dehydrogenase from Salmonella typhi.